We begin with the raw amino-acid sequence, 478 residues long: TFIIA-alpha and beta-like factor (478 aa).

The disordered stretch occupies residues V309–V427. Over residues S390–S401 the composition is skewed to polar residues. A compositionally biased stretch (acidic residues) spans V411–V427.

It belongs to the TFIIA subunit 1 family. Testis specific. Detected in adult testis mostly in round and elongating spermatids (at protein level). Detected in testis.

The protein resides in the nucleus. Its function is as follows. May function as a testis specific transcription factor. Binds DNA in conjunction with GTF2A2 and TBP (the TATA-binding protein) and together with GTF2A2, allows mRNA transcription. The sequence is that of TFIIA-alpha and beta-like factor (GTF2A1L) from Homo sapiens (Human).